A 352-amino-acid chain; its full sequence is MSVAGLKKQFHKATQKVSEKVGGAEGTKLDDDFKEMERKVDVTSRAVMEIMTKTIEYLQPNPASRAKLSMINTMSKIRGQEKGPGYPQAEALLAEAMLKFGRELGDDCNFGPALGEVGEAMRELSEVKDSLDMEVKQNFIDPLQNLHDKDLREIQHHLKKLEGRRLDFDYKKKRQGKIPDEELRQALEKFDESKEIAESSMFNLLEMDIEQVSQLSALVQAQLEYHKQAVQILQQVTVRLEERIRQASSQPRREYQPKPRMSLEFATGDSTQPNGGLSHTGTPKPPGVQMDQPCCRALYDFEPENEGELGFKEGDIITLTNQIDENWYEGMLHGQSGFFPINYVEILVALPH.

Positions 1–21 are membrane-binding amphipathic helix; it reads MSVAGLKKQFHKATQKVSEKV. Positions 1-27 are disordered; sequence MSVAGLKKQFHKATQKVSEKVGGAEGT. Residues 1–125 form a binds and tubulates liposomes region; it reads MSVAGLKKQF…EVGEAMRELS (125 aa). Positions 18 to 249 constitute a BAR domain; it reads SEKVGGAEGT…LEERIRQASS (232 aa). The interval 60–87 is required for dimerization upon membrane association; that stretch reads PNPASRAKLSMINTMSKIRGQEKGPGYP. Positions 181–248 form a coiled coil; that stretch reads EELRQALEKF…RLEERIRQAS (68 aa). Position 262 is a phosphoserine (Ser262). Positions 264–289 are disordered; it reads EFATGDSTQPNGGLSHTGTPKPPGVQ. Positions 268-281 are enriched in polar residues; it reads GDSTQPNGGLSHTG. One can recognise an SH3 domain in the interval 290-349; it reads MDQPCCRALYDFEPENEGELGFKEGDIITLTNQIDENWYEGMLHGQSGFFPINYVEILVA. Tyr299 is modified (phosphotyrosine).

The protein belongs to the endophilin family. As to quaternary structure, monomer; in cytoplasm. Homodimer; when associated with membranes. Interacts with SYNJ1. Interacts with DNM1. Interacts with MAP4K3; the interaction appears to regulate MAP4K3-mediated JNK activation. Interacts with OPHN1. Interacts with PDCD6IP. Interacts with BIN2. Interacts with ATXN2. Interacts with ADAM9 and ADAM15 cytoplasmic tails. Interacts with TMEM108. Interacts with ADGRB2.

The protein resides in the cytoplasm. It localises to the membrane. It is found in the early endosome. The protein localises to the presynapse. In terms of biological role, implicated in synaptic vesicle endocytosis. May recruit other proteins to membranes with high curvature. Required for BDNF-dependent dendrite outgrowth. Cooperates with SH3GL2 to mediate BDNF-NTRK2 early endocytic trafficking and signaling from early endosomes. In Mus musculus (Mouse), this protein is Endophilin-A1 (Sh3gl2).